A 96-amino-acid polypeptide reads, in one-letter code: Co-chaperonin GroES (96 aa).

This sequence belongs to the GroES chaperonin family. In terms of assembly, heptamer of 7 subunits arranged in a ring. Interacts with the chaperonin GroEL.

Its subcellular location is the cytoplasm. Together with the chaperonin GroEL, plays an essential role in assisting protein folding. The GroEL-GroES system forms a nano-cage that allows encapsulation of the non-native substrate proteins and provides a physical environment optimized to promote and accelerate protein folding. GroES binds to the apical surface of the GroEL ring, thereby capping the opening of the GroEL channel. The protein is Co-chaperonin GroES of Tremblaya princeps.